Here is a 153-residue protein sequence, read N- to C-terminus: Glucose-6-phosphate 1-dehydrogenase (153 aa).

2 residues coordinate NADP(+): R21 and K120. Position 120 (K120) interacts with D-glucose 6-phosphate.

Belongs to the glucose-6-phosphate dehydrogenase family.

Its subcellular location is the cytoplasm. It is found in the cytosol. It catalyses the reaction D-glucose 6-phosphate + NADP(+) = 6-phospho-D-glucono-1,5-lactone + NADPH + H(+). Its pathway is carbohydrate degradation; pentose phosphate pathway; D-ribulose 5-phosphate from D-glucose 6-phosphate (oxidative stage): step 1/3. Functionally, cytosolic glucose-6-phosphate dehydrogenase that catalyzes the first and rate-limiting step of the oxidative branch within the pentose phosphate pathway/shunt, an alternative route to glycolysis for the dissimilation of carbohydrates and a major source of reducing power and metabolic intermediates for fatty acid and nucleic acid biosynthetic processes. The polypeptide is Glucose-6-phosphate 1-dehydrogenase (Zw) (Drosophila simulans (Fruit fly)).